Consider the following 240-residue polypeptide: UDP-2,3-diacylglucosamine hydrolase (240 aa).

5 residues coordinate Mn(2+): Asp8, His10, Asp41, Asn78, and His113. A substrate-binding site is contributed by 78 to 79 (NR). Substrate contacts are provided by Asp121, Ser159, Asn163, Lys166, and His194. Residues His194 and His196 each coordinate Mn(2+).

This sequence belongs to the LpxH family. The cofactor is Mn(2+).

It localises to the cell inner membrane. The enzyme catalyses UDP-2-N,3-O-bis[(3R)-3-hydroxytetradecanoyl]-alpha-D-glucosamine + H2O = 2-N,3-O-bis[(3R)-3-hydroxytetradecanoyl]-alpha-D-glucosaminyl 1-phosphate + UMP + 2 H(+). The protein operates within glycolipid biosynthesis; lipid IV(A) biosynthesis; lipid IV(A) from (3R)-3-hydroxytetradecanoyl-[acyl-carrier-protein] and UDP-N-acetyl-alpha-D-glucosamine: step 4/6. Functionally, hydrolyzes the pyrophosphate bond of UDP-2,3-diacylglucosamine to yield 2,3-diacylglucosamine 1-phosphate (lipid X) and UMP by catalyzing the attack of water at the alpha-P atom. Involved in the biosynthesis of lipid A, a phosphorylated glycolipid that anchors the lipopolysaccharide to the outer membrane of the cell. The sequence is that of UDP-2,3-diacylglucosamine hydrolase from Shewanella baltica (strain OS155 / ATCC BAA-1091).